Consider the following 157-residue polypeptide: F-box protein SNE (157 aa).

In terms of domain architecture, F-box spans 24–70 (PVFSINDHHDVLVEILRRLDGSSLCSAACVCRLWSAVARNDSIWEEL).

Part of a SCF (ASK-cullin-F-box) protein ligase complex. Interacts directly with SKP1A and SKP1B. As to expression, highly expressed in flowers and at much lower level in seedlings, rosette leaves and green siliques.

The protein localises to the nucleus. The protein operates within protein modification; protein ubiquitination. Essential component of a SCF-type E3 ligase complex that positively regulates the gibberellin signaling pathway. Upon gibberellin treatment, such complex probably mediates the ubiquitination and subsequent degradation of DELLA proteins (GAI, RGA and RGL2), some repressors of the gibberellin pathway, leading to activate the pathway. Can partially complement the absence of GID2/SLY1. The protein is F-box protein SNE (SNE) of Arabidopsis thaliana (Mouse-ear cress).